The sequence spans 107 residues: Ig kappa chain V-VI region XRPC 24 (107 aa).

Residues 1 to 23 form a framework-1 region; it reads EIVLTQSPAITAASLGQKVTITC. A disulfide bridge connects residues Cys23 and Cys87. Residues 24–33 are complementarity-determining-1; the sequence is SASSSVSYMH. Residues 34 to 48 are framework-2; that stretch reads WYQQKSGTSPKPWIY. Positions 49-55 are complementarity-determining-2; that stretch reads EISKLAS. The framework-3 stretch occupies residues 56–87; it reads GVPARFSGSGSGTSYSLTISSMEAEDAAIYYC. The complementarity-determining-3 stretch occupies residues 88–96; that stretch reads QQWNYPLIT. A framework-4 region spans residues 97–106; the sequence is FGSGTKLEIK.

The polypeptide is Ig kappa chain V-VI region XRPC 24 (Mus musculus (Mouse)).